A 381-amino-acid chain; its full sequence is Creatine kinase B-type (381 aa).

The Phosphagen kinase N-terminal domain occupies 11–98 (KMKYSVDDEY…FDPVIEDRHG (88 aa)). Valine 72 lines the creatine pocket. Residues 125 to 367 (YVLSSRVRTG…KLLIEMEKRL (243 aa)) enclose the Phosphagen kinase C-terminal domain. ATP contacts are provided by residues 128–132 (SSRVR), arginine 130, arginine 132, and histidine 191. Glutamate 232 provides a ligand contact to creatine. Arginine 236 contacts ATP. Threonine 282 is subject to Phosphothreonine; by autocatalysis. Residue serine 285 participates in creatine binding. At serine 285 the chain carries Phosphoserine; by autocatalysis. A Phosphothreonine; by autocatalysis modification is found at threonine 289. Residues arginine 292, arginine 320, 320-325 (RGTGGV), and aspartate 335 contribute to the ATP site.

Belongs to the ATP:guanido phosphotransferase family. In terms of assembly, dimer of identical or non-identical chains, which can be either B (brain type) or M (muscle type). With MM being the major form in skeletal muscle and myocardium, MB existing in myocardium, and BB existing in many tissues, especially brain. Ba-CK and Bb-CK are phosphorylated. Post-translationally, the N-terminus of BA-CK is blocked. In terms of tissue distribution, expressed in almost all tissues and found enriched in various region of the brain, retina, heart, gizzard, gut and sperm.

It is found in the cytoplasm. The protein localises to the cytosol. The protein resides in the mitochondrion. Its subcellular location is the cell membrane. The catalysed reaction is creatine + ATP = N-phosphocreatine + ADP + H(+). In terms of biological role, reversibly catalyzes the transfer of phosphate between ATP and various phosphogens (e.g. creatine phosphate). Creatine kinase isoenzymes play a central role in energy transduction in tissues with large, fluctuating energy demands, such as skeletal muscle, heart, brain and spermatozoa. The chain is Creatine kinase B-type from Gallus gallus (Chicken).